The primary structure comprises 369 residues: Coiled-coil domain-containing protein 130 homolog (369 aa).

The span at 233–263 (TRYRDTKTHDDHLESSRDRIESRRIFRRPEE) shows a compositional bias: basic and acidic residues. Positions 233 to 369 (TRYRDTKTHD…EYGNSSDDSD (137 aa)) are disordered. Low complexity predominate over residues 266–282 (TPSTSSGSSGGAVPSAS). A compositionally biased stretch (basic and acidic residues) spans 283–297 (ERLKATMKAERDKRI). Over residues 299–310 (ASFSTAGTSSAT) the composition is skewed to low complexity.

It belongs to the CWC16 family.

The sequence is that of Coiled-coil domain-containing protein 130 homolog from Caenorhabditis elegans.